Consider the following 184-residue polypeptide: GTP cyclohydrolase 1 (184 aa).

Positions 75, 78, and 146 each coordinate Zn(2+).

The protein belongs to the GTP cyclohydrolase I family. As to quaternary structure, toroid-shaped homodecamer, composed of two pentamers of five dimers.

It catalyses the reaction GTP + H2O = 7,8-dihydroneopterin 3'-triphosphate + formate + H(+). The protein operates within cofactor biosynthesis; 7,8-dihydroneopterin triphosphate biosynthesis; 7,8-dihydroneopterin triphosphate from GTP: step 1/1. In Streptococcus sanguinis (strain SK36), this protein is GTP cyclohydrolase 1.